The chain runs to 124 residues: MYATPIGYADTRFETAADAPRQGVETPYAANVQVYESFRGGLVGLEPDDRVVVVWWADDADRDVLAVRDGDRGVFTTRSPARPNPVCITPCELLAVDAADGTLAIRGVDMAHGSPVLDLKPALD.

A TsaA-like domain is found at 3 to 124 (ATPIGYADTR…PVLDLKPALD (122 aa)). Residues 20–22 (PRQ), 58–59 (DD), R78, and 111–114 (AHGS) contribute to the S-adenosyl-L-methionine site.

It belongs to the tRNA methyltransferase O family.

The polypeptide is Probable S-adenosyl-L-methionine-binding protein VNG_1115H (Halobacterium salinarum (strain ATCC 700922 / JCM 11081 / NRC-1) (Halobacterium halobium)).